The primary structure comprises 201 residues: Holliday junction branch migration complex subunit RuvA (201 aa).

The segment at 1-63 is domain I; sequence MIAYLSGVVR…EDAQLLFGFP (63 aa). The tract at residues 64 to 142 is domain II; it reads DADHLKLFDL…EHLAAAASGA (79 aa). The tract at residues 143-150 is flexible linker; it reads AGGKRPAR. The tract at residues 151–201 is domain III; that stretch reads VSSTAGHDAVDALLALGFREAQVRAAVAELLGADPEASADTLIRKALGRLR.

Belongs to the RuvA family. In terms of assembly, homotetramer. Forms an RuvA(8)-RuvB(12)-Holliday junction (HJ) complex. HJ DNA is sandwiched between 2 RuvA tetramers; dsDNA enters through RuvA and exits via RuvB. An RuvB hexamer assembles on each DNA strand where it exits the tetramer. Each RuvB hexamer is contacted by two RuvA subunits (via domain III) on 2 adjacent RuvB subunits; this complex drives branch migration. In the full resolvosome a probable DNA-RuvA(4)-RuvB(12)-RuvC(2) complex forms which resolves the HJ.

The protein localises to the cytoplasm. The RuvA-RuvB-RuvC complex processes Holliday junction (HJ) DNA during genetic recombination and DNA repair, while the RuvA-RuvB complex plays an important role in the rescue of blocked DNA replication forks via replication fork reversal (RFR). RuvA specifically binds to HJ cruciform DNA, conferring on it an open structure. The RuvB hexamer acts as an ATP-dependent pump, pulling dsDNA into and through the RuvAB complex. HJ branch migration allows RuvC to scan DNA until it finds its consensus sequence, where it cleaves and resolves the cruciform DNA. The polypeptide is Holliday junction branch migration complex subunit RuvA (Deinococcus radiodurans (strain ATCC 13939 / DSM 20539 / JCM 16871 / CCUG 27074 / LMG 4051 / NBRC 15346 / NCIMB 9279 / VKM B-1422 / R1)).